The following is a 381-amino-acid chain: Queuine tRNA-ribosyltransferase (381 aa).

Aspartate 90 serves as the catalytic Proton acceptor. Substrate-binding positions include 90-94 (DSGGF), aspartate 144, glutamine 193, and glycine 221. Residues 252 to 258 (GVGTPEN) are RNA binding. The active-site Nucleophile is aspartate 271. The tract at residues 276-280 (TRNAR) is RNA binding; important for wobble base 34 recognition. Zn(2+)-binding residues include cysteine 309, cysteine 311, cysteine 314, and histidine 340.

It belongs to the queuine tRNA-ribosyltransferase family. As to quaternary structure, homodimer. Within each dimer, one monomer is responsible for RNA recognition and catalysis, while the other monomer binds to the replacement base PreQ1. It depends on Zn(2+) as a cofactor.

It catalyses the reaction 7-aminomethyl-7-carbaguanine + guanosine(34) in tRNA = 7-aminomethyl-7-carbaguanosine(34) in tRNA + guanine. It functions in the pathway tRNA modification; tRNA-queuosine biosynthesis. Functionally, catalyzes the base-exchange of a guanine (G) residue with the queuine precursor 7-aminomethyl-7-deazaguanine (PreQ1) at position 34 (anticodon wobble position) in tRNAs with GU(N) anticodons (tRNA-Asp, -Asn, -His and -Tyr). Catalysis occurs through a double-displacement mechanism. The nucleophile active site attacks the C1' of nucleotide 34 to detach the guanine base from the RNA, forming a covalent enzyme-RNA intermediate. The proton acceptor active site deprotonates the incoming PreQ1, allowing a nucleophilic attack on the C1' of the ribose to form the product. After dissociation, two additional enzymatic reactions on the tRNA convert PreQ1 to queuine (Q), resulting in the hypermodified nucleoside queuosine (7-(((4,5-cis-dihydroxy-2-cyclopenten-1-yl)amino)methyl)-7-deazaguanosine). This is Queuine tRNA-ribosyltransferase from Helicobacter hepaticus (strain ATCC 51449 / 3B1).